The following is a 235-amino-acid chain: Ribonuclease P protein component 3 (235 aa).

It belongs to the eukaryotic/archaeal RNase P protein component 3 family. Consists of a catalytic RNA component and at least 4-5 protein subunits.

It is found in the cytoplasm. The catalysed reaction is Endonucleolytic cleavage of RNA, removing 5'-extranucleotides from tRNA precursor.. In terms of biological role, part of ribonuclease P, a protein complex that generates mature tRNA molecules by cleaving their 5'-ends. This chain is Ribonuclease P protein component 3, found in Haloarcula marismortui (strain ATCC 43049 / DSM 3752 / JCM 8966 / VKM B-1809) (Halobacterium marismortui).